The sequence spans 429 residues: SET domain-containing protein 14 (429 aa).

Zn(2+) contacts are provided by Cys-26, Cys-29, Cys-39, Cys-42, Cys-48, Cys-52, His-60, and Cys-64. The segment at 26 to 64 (CNQCLTSMAELKKCSACRRLAYCSQECQRADWKLHKVEC) adopts an MYND-type zinc-finger fold.

The protein localises to the nucleus. The polypeptide is SET domain-containing protein 14 (set-14) (Caenorhabditis elegans).